A 220-amino-acid chain; its full sequence is MLSRQALLRPARVLNTQVRTYAAAAAASSKVKPPVTLFGLDGTYATALYTAAVKTSALEPTAKAISSLGNLLAKDPKLASILETPTLSPADKSAIVAELQKSVGVSNETVKNFLATLAENNRLGLLPSVVAKFSELMSAARGEVEMVVTSAQPLDNKTLNRLESAVAKSPYVGSGKKLKVTNKVNADIIGGLVVEIGERTIDLSVSSKIAKMNKLLSEAL.

Belongs to the ATPase delta chain family. In terms of assembly, F-type ATPases have 2 components, CF(1) - the catalytic core - and CF(0) - the membrane proton channel. CF(1) has five subunits: alpha(3), beta(3), gamma(1), delta(1), epsilon(1). CF(0) has three main subunits: a, b and c.

The protein resides in the mitochondrion. The protein localises to the mitochondrion inner membrane. Its function is as follows. Mitochondrial membrane ATP synthase (F(1)F(0) ATP synthase or Complex V) produces ATP from ADP in the presence of a proton gradient across the membrane which is generated by electron transport complexes of the respiratory chain. F-type ATPases consist of two structural domains, F(1) - containing the extramembraneous catalytic core and F(0) - containing the membrane proton channel, linked together by a central stalk and a peripheral stalk. During catalysis, ATP synthesis in the catalytic domain of F(1) is coupled via a rotary mechanism of the central stalk subunits to proton translocation. Part of the complex F(0) domain and the peripheric stalk, which acts as a stator to hold the catalytic alpha(3)beta(3) subcomplex and subunit a/ATP6 static relative to the rotary elements. This is ATP synthase subunit 5, mitochondrial (atp-5) from Neurospora crassa (strain ATCC 24698 / 74-OR23-1A / CBS 708.71 / DSM 1257 / FGSC 987).